The chain runs to 952 residues: Anion exchange protein 4 (952 aa).

The segment at 1–41 (MKLPGQGDFESSDAHENAHSEEPDSGLGPGPGLNGPSGIDI) is disordered. Residues 12-22 (SDAHENAHSEE) are compositionally biased toward basic and acidic residues. 4 consecutive transmembrane segments (helical) span residues 385–405 (AVFY…GLLG), 413–433 (GVLE…LMAG), 470–490 (VGIW…SLLV), and 501–521 (FCAL…LNLI). Asn-546 and Asn-569 each carry an N-linked (GlcNAc...) asparagine glycan. 7 consecutive transmembrane segments (helical) span residues 593–613 (VPDI…CAIA), 634–654 (FSSV…GLAT), 681–701 (PWWL…LIFM), 727–747 (LFCV…WYVS), 784–804 (GLVV…LKFI), 807–827 (PVLY…IQFV), and 870–890 (VVKS…LVAI). The disordered stretch occupies residues 915–938 (ETIPENRSEPEHLFSGNDSEDSEL). 3 N-linked (GlcNAc...) asparagine glycosylation sites follow: Asn-920, Asn-931, and Asn-948.

Belongs to the anion exchanger (TC 2.A.31) family. As to expression, expressed in submandibular gland (SMG) duct and cortical collecting duct (CCD) of kidney. Lower expressed in duodenal villi.

The protein localises to the basolateral cell membrane. It catalyses the reaction 2 hydrogencarbonate(out) + chloride(in) + Na(+)(out) = 2 hydrogencarbonate(in) + chloride(out) + Na(+)(in). It carries out the reaction K(+)(in) + 2 hydrogencarbonate(in) + chloride(out) = K(+)(out) + 2 hydrogencarbonate(out) + chloride(in). The enzyme catalyses Li(+)(in) + 2 hydrogencarbonate(in) + chloride(out) = Li(+)(out) + 2 hydrogencarbonate(out) + chloride(in). The catalysed reaction is Rb(+)(in) + 2 hydrogencarbonate(in) + chloride(out) = Rb(+)(out) + 2 hydrogencarbonate(out) + chloride(in). It catalyses the reaction Cs(+)(in) + 2 hydrogencarbonate(in) + chloride(out) = Cs(+)(out) + 2 hydrogencarbonate(out) + chloride(in). Its activity is regulated as follows. Cl(-)/HCO3(-) exchanger activity is substantially increased in response to 5 uM isoproterenol. Cl(-)/HCO3(-) exchanger activity is increased by both forskolin and coexpression with the catalytic subunit alpha of PKA. Functionally, electroneutral Cl(-)/HCO3(-) antiporter that favors chloride ion entry and efflux of hydrogencarbonate and sodium ion across the basolateral membrane and may participate in salivary secretion. Also mediates Cl(-)/HCO3(-) exchange activity in the presence of K(+) as well as Cs(+), Li(+), and Rb(+). Does not contribute to Cl(-)/HCO3(-) exchanger in the apical membrane of the upper villous epithelium. This is Anion exchange protein 4 from Mus musculus (Mouse).